Here is a 393-residue protein sequence, read N- to C-terminus: LL-diaminopimelate aminotransferase (393 aa).

2 residues coordinate substrate: Tyr-14 and Gly-41. Residues Tyr-71, 104–105 (AK), Tyr-128, Asn-174, Tyr-205, and 233–235 (SFS) each bind pyridoxal 5'-phosphate. Lys-105, Tyr-128, and Asn-174 together coordinate substrate. Lys-236 bears the N6-(pyridoxal phosphate)lysine mark. Pyridoxal 5'-phosphate contacts are provided by Arg-244 and Asn-275. The substrate site is built by Asn-275 and Arg-369.

Belongs to the class-I pyridoxal-phosphate-dependent aminotransferase family. LL-diaminopimelate aminotransferase subfamily. As to quaternary structure, homodimer. Pyridoxal 5'-phosphate is required as a cofactor.

It carries out the reaction (2S,6S)-2,6-diaminopimelate + 2-oxoglutarate = (S)-2,3,4,5-tetrahydrodipicolinate + L-glutamate + H2O + H(+). Its pathway is amino-acid biosynthesis; L-lysine biosynthesis via DAP pathway; LL-2,6-diaminopimelate from (S)-tetrahydrodipicolinate (aminotransferase route): step 1/1. Its function is as follows. Involved in the synthesis of meso-diaminopimelate (m-DAP or DL-DAP), required for both lysine and peptidoglycan biosynthesis. Catalyzes the direct conversion of tetrahydrodipicolinate to LL-diaminopimelate. The protein is LL-diaminopimelate aminotransferase of Chlamydia muridarum (strain MoPn / Nigg).